Here is a 241-residue protein sequence, read N- to C-terminus: Transcription factor HEC1 (241 aa).

The region spanning 128 to 177 is the bHLH domain; that stretch reads ISKDPQSVAARHRRERISERIRILQRLVPGGTKMDTASMLDEAIHYVKFL.

In terms of assembly, homodimer. Interacts with SPT. Interacts with BZIP30. Flowers, especially in gynoecium.

The protein resides in the nucleus. Required for the female reproductive tract development and fertility. In Arabidopsis thaliana (Mouse-ear cress), this protein is Transcription factor HEC1 (HEC1).